Consider the following 899-residue polypeptide: Alanine--tRNA ligase (899 aa).

Zn(2+) contacts are provided by H595, H599, C703, and H707.

It belongs to the class-II aminoacyl-tRNA synthetase family. It depends on Zn(2+) as a cofactor.

The protein localises to the cytoplasm. It carries out the reaction tRNA(Ala) + L-alanine + ATP = L-alanyl-tRNA(Ala) + AMP + diphosphate. Catalyzes the attachment of alanine to tRNA(Ala) in a two-step reaction: alanine is first activated by ATP to form Ala-AMP and then transferred to the acceptor end of tRNA(Ala). Also edits incorrectly charged Ser-tRNA(Ala) and Gly-tRNA(Ala) via its editing domain. In Caldivirga maquilingensis (strain ATCC 700844 / DSM 13496 / JCM 10307 / IC-167), this protein is Alanine--tRNA ligase.